A 251-amino-acid chain; its full sequence is Imidazole glycerol phosphate synthase subunit HisF (251 aa).

Residues Asp11 and Asp130 contribute to the active site.

It belongs to the HisA/HisF family. As to quaternary structure, heterodimer of HisH and HisF.

Its subcellular location is the cytoplasm. It carries out the reaction 5-[(5-phospho-1-deoxy-D-ribulos-1-ylimino)methylamino]-1-(5-phospho-beta-D-ribosyl)imidazole-4-carboxamide + L-glutamine = D-erythro-1-(imidazol-4-yl)glycerol 3-phosphate + 5-amino-1-(5-phospho-beta-D-ribosyl)imidazole-4-carboxamide + L-glutamate + H(+). The protein operates within amino-acid biosynthesis; L-histidine biosynthesis; L-histidine from 5-phospho-alpha-D-ribose 1-diphosphate: step 5/9. In terms of biological role, IGPS catalyzes the conversion of PRFAR and glutamine to IGP, AICAR and glutamate. The HisF subunit catalyzes the cyclization activity that produces IGP and AICAR from PRFAR using the ammonia provided by the HisH subunit. The chain is Imidazole glycerol phosphate synthase subunit HisF from Thiobacillus denitrificans (strain ATCC 25259 / T1).